The primary structure comprises 851 residues: DNA mismatch repair protein MutS (851 aa).

602-609 provides a ligand contact to ATP; sequence GPNMSGKS.

It belongs to the DNA mismatch repair MutS family.

In terms of biological role, this protein is involved in the repair of mismatches in DNA. It is possible that it carries out the mismatch recognition step. This protein has a weak ATPase activity. The chain is DNA mismatch repair protein MutS from Streptococcus pyogenes serotype M18 (strain MGAS8232).